The primary structure comprises 405 residues: Octaketide synthase 3 (405 aa).

Polar residues predominate over residues 1–10 (MGSIAESSPL). Positions 1 to 22 (MGSIAESSPLMSRENVEGIRKA) are disordered. Residue Cys176 is part of the active site. CoA is bound by residues Ser283 and 320-323 (GGRA).

This sequence belongs to the thiolase-like superfamily. Chalcone/stilbene synthases family. Homodimer.

It functions in the pathway secondary metabolite biosynthesis; flavonoid biosynthesis. In terms of biological role, catalyzes the iterative condensations of 8 molecules of malonyl-CoA to produce aromatic octaketides, SEK4 and SEK4b, the products of the minimal polyketide synthase for the benzoisochromanequinone actinorhodin. May be involved in the biosynthesis of the octaketide barbaloin. The polypeptide is Octaketide synthase 3 (PKS5) (Aloe arborescens (Kidachi aloe)).